The following is a 307-amino-acid chain: Voltage-dependent anion channel-forming protein alr2987 (307 aa).

The next 4 membrane-spanning stretches (helical) occupy residues 19-39 (VIGAIYKRVICCALFGVLVTL), 47-67 (VSQPILGSVIPSIVLGLLLVF), 209-229 (PLAYSIHLKQLLLLYCFLLPF), and 238-258 (WTGLVVGLVSFTLFGIEAIGL).

It belongs to the anion channel-forming bestrophin (TC 1.A.46) family.

It is found in the cell membrane. This is Voltage-dependent anion channel-forming protein alr2987 from Nostoc sp. (strain PCC 7120 / SAG 25.82 / UTEX 2576).